The chain runs to 386 residues: MNAALATTTATTPVLRRETPLLHYCSLTTKSPVYQINRVRFGSCVQTVSKKFLKISASSQSASAAVNVTADASIPKEMKAWVYSDYGGVDVLKLESNIVVPEIKEDQVLIKVVAAALNPVDAKRRQGKFKATDSPLPTVPGYDVAGVVVKVGSAVKDLKEGDEVYANVSEKALEGPKQFGSLAEYTAVEEKLLALKPKNIDFAQAAGLPLAIETADEGLVRTEFSAGKSILVLNGAGGVGSLVIQLAKHVYGASKVAATASTEKLELVRSLGADLAIDYTKENIEDLPDKYDVVFDAIGMCDKAVKVIKEGGKVVALTGAVTPPGFRFVVTSNGDVLKKLNPYIESGKVKPVVDPKGPFPFSRVADAFSYLETNHATGKVVVYPIP.

Belongs to the zinc-containing alcohol dehydrogenase family. Quinone oxidoreductase subfamily.

Its subcellular location is the plastid. The protein resides in the chloroplast. Functionally, reduces the double bond in short-chain unsaturated carbonyls. Acts preferentially on alpha,beta-unsaturated ketones rather on alpha,beta-unsaturated aldehydes. Has no activity with (E)-2-hexenal and (E)-2-pentenal. Contributes to detoxify stromal reactive carbonyls produced under oxidative stress. The sequence is that of NADPH-dependent alkenal/one oxidoreductase, chloroplastic from Arabidopsis thaliana (Mouse-ear cress).